A 174-amino-acid chain; its full sequence is CEN-like protein 1 (174 aa).

Belongs to the phosphatidylethanolamine-binding protein family. In terms of tissue distribution, expressed in vegetative axillary meristems but not in the main shoot meristem.

The protein resides in the cytoplasm. Functionally, may form complexes with phosphorylated ligands by interfering with kinases and their effectors. The polypeptide is CEN-like protein 1 (CET1) (Nicotiana tabacum (Common tobacco)).